The primary structure comprises 281 residues: DegV domain-containing protein DR_1986 (281 aa).

One can recognise a DegV domain in the interval 3 to 278 (IAIVTDSTSD…PGAVGVALEP (276 aa)). Hexadecanoate contacts are provided by Thr61 and Ser93.

May bind long-chain fatty acids, such as palmitate, and may play a role in lipid transport or fatty acid metabolism. The protein is DegV domain-containing protein DR_1986 of Deinococcus radiodurans (strain ATCC 13939 / DSM 20539 / JCM 16871 / CCUG 27074 / LMG 4051 / NBRC 15346 / NCIMB 9279 / VKM B-1422 / R1).